A 112-amino-acid chain; its full sequence is uncharacterized protein (112 aa).

This is an uncharacterized protein from Caenorhabditis elegans.